We begin with the raw amino-acid sequence, 140 residues long: Histone H3-like centromeric protein A (140 aa).

The tract at residues 1 to 46 (MGPRRRSRKPEAPRRRSPSPTPTPGPSRRGPSLGASSHQHSRRRQG) is disordered. At Gly-2 the chain carries N,N,N-trimethylglycine. Ser-7 bears the Phosphoserine; by AURKA and AURKB mark. 3 positions are modified to phosphoserine: Ser-17, Ser-19, and Ser-27. Positions 26-37 (PSRRGPSLGASS) are enriched in low complexity. The interval 39-54 (QHSRRRQGWLKEIRKL) is important for flexibility of DNA ends that protrude from nucleosomes. Ser-68 carries the post-translational modification Phosphoserine. The interval 75–116 (CVKFTRGVDFNWQAQALLALQEAAEAFLVHLFEDAYLLTLHA) is CATD.

It belongs to the histone H3 family. In terms of assembly, component of centromeric nucleosomes, where DNA is wrapped around a histone octamer core. The octamer contains two molecules each of H2A, H2B, CENPA and H4 assembled in one CENPA-H4 heterotetramer and two H2A-H2B heterodimers. CENPA modulates the DNA-binding characteristics of nucleosomes so that protruding DNA ends have higher flexibility than in nucleosomes containing conventional histone H3. Inhibits binding of histone H1 to nucleosomes, since histone H1 binds preferentially to rigid DNA linkers that protrude from nucleosomes. Nucleosomes containing CENPA also contain histone H2A variants such as MACROH2A and H2A.Z/H2AZ1. The CENPA-H4 heterotetramer is more compact and structurally more rigid than corresponding H3-H4 heterotetramers. Can assemble into nucleosomes that contain both CENPA and histone H3.3; these nucleosomes interact with a single CENPC chain. Heterotrimer composed of HJURP, CENPA and histone H4, where HJURP interacts with the dimer formed by CENPA and histone H4 and prevents tetramerization of CENPA and H4. Component of the CENPA-NAC complex, at least composed of CENPA, CENPC, CENPH, CENPM, CENPN, CENPT and CENPU. Interacts (via CATD domain) with HJURP; the interaction is direct and is required for its localization to centromeres. Interacts with CENPC, CENPN and CENPT; interaction is direct. Part of a centromere complex consisting of CENPA, CENPT and CENPW. Identified in centromere complexes containing histones H2A, H2B and H4, and at least CENPA, CENPB, CENPC, CENPT, CENPN, HJURP, SUPT16H, SSRP1 and RSF1. Can self-associate. The CENPA-H4 heterotetramer can bind DNA by itself (in vitro). Interacts with CDK1, PPP1CA and RBBP7. (Microbial infection) Interacts directly with herpes virus HHV-1 protein ICP0. Ubiquitinated. Interaction with herpes virus HSV-1 ICP0 protein, leads to its degradation by the proteasome pathway. Post-translationally, trimethylated by NTMT1 at the N-terminal glycine after cleavage of Met-1. Methylation is low before incorporation into nucleosomes and increases with cell cycle progression, with the highest levels in mitotic nucleosomes. In terms of processing, phosphorylated by CDK1 at Ser-68 during early mitosis; this abolishes association with chromatin and centromeres, prevents interaction with HJURP and thereby prevents premature assembly of CENPA into centromeres. Dephosphorylated at Ser-68 by PPP1CA during late mitosis. Phosphorylation of Ser-7 by AURKA and AURKB during prophase is required for localization of AURKA and AURKB at inner centromere and is essential for normal cytokinesis. Initial phosphorylation during prophase is mediated by AURKA and is maintained by AURKB. Poly-ADP-ribosylated by PARP1.

It is found in the nucleus. The protein resides in the chromosome. It localises to the centromere. In terms of biological role, histone H3-like nucleosomal protein that is specifically found in centromeric nucleosomes. Replaces conventional H3 in the nucleosome core of centromeric chromatin that serves as an assembly site for the inner kinetochore. The presence of CENPA subtly modifies the nucleosome structure and the way DNA is wrapped around the nucleosome and gives rise to protruding DNA ends that are less well-ordered and rigid compared to nucleosomes containing histone H3. May serve as an epigenetic mark that propagates centromere identity through replication and cell division. Required for recruitment and assembly of kinetochore proteins, and as a consequence required for progress through mitosis, chromosome segregation and cytokinesis. The polypeptide is Histone H3-like centromeric protein A (CENPA) (Homo sapiens (Human)).